We begin with the raw amino-acid sequence, 283 residues long: BTB/POZ domain-containing protein KCTD15 (283 aa).

The interval 1 to 33 (MPHRKERPSGSSLHAHGSTGTAEGGSMSRLSLT) is disordered. Residues Ser31, Ser35, and Ser38 each carry the phosphoserine modification. The BTB domain maps to 56 to 126 (APVHIDVGGH…LRTSKLLLPD (71 aa)).

As to quaternary structure, forms oligomers, predominantly homopentamers. Interacts with KCTD1, probably forming heteropentamers depending on its abundance in a cell-type dependent manner. Interacts with TFAP2A; this interaction inhibits TFAP2A transcriptional activation.

Its subcellular location is the nucleus. Its function is as follows. During embryonic development, interferes with neural crest formation. Inhibits AP2 transcriptional activity by interaction with its activation domain. This Bos taurus (Bovine) protein is BTB/POZ domain-containing protein KCTD15 (KCTD15).